The following is a 303-amino-acid chain: Aspartate carbamoyltransferase catalytic subunit (303 aa).

Carbamoyl phosphate contacts are provided by Arg51 and Thr52. Residue Lys80 coordinates L-aspartate. 3 residues coordinate carbamoyl phosphate: Arg101, His129, and Gln132. Residues Arg162 and Arg221 each coordinate L-aspartate. Residues Leu260 and Pro261 each coordinate carbamoyl phosphate.

It belongs to the aspartate/ornithine carbamoyltransferase superfamily. ATCase family. As to quaternary structure, heterooligomer of catalytic and regulatory chains.

It carries out the reaction carbamoyl phosphate + L-aspartate = N-carbamoyl-L-aspartate + phosphate + H(+). It functions in the pathway pyrimidine metabolism; UMP biosynthesis via de novo pathway; (S)-dihydroorotate from bicarbonate: step 2/3. In terms of biological role, catalyzes the condensation of carbamoyl phosphate and aspartate to form carbamoyl aspartate and inorganic phosphate, the committed step in the de novo pyrimidine nucleotide biosynthesis pathway. The chain is Aspartate carbamoyltransferase catalytic subunit from Saccharolobus islandicus (strain M.16.27) (Sulfolobus islandicus).